The sequence spans 600 residues: Proline dehydrogenase 1, mitochondrial (600 aa).

The tract at residues Ala-155–Arg-177 is disordered. An N6-acetyllysine mark is found at Lys-368 and Lys-486.

It belongs to the proline oxidase family. FAD is required as a cofactor. Expressed in lung, skeletal muscle and brain, to a lesser extent in heart and kidney, and weakly in liver, placenta and pancreas.

It is found in the mitochondrion matrix. It catalyses the reaction L-proline + a quinone = (S)-1-pyrroline-5-carboxylate + a quinol + H(+). The protein operates within amino-acid degradation; L-proline degradation into L-glutamate; L-glutamate from L-proline: step 1/2. Functionally, converts proline to delta-1-pyrroline-5-carboxylate. This chain is Proline dehydrogenase 1, mitochondrial, found in Homo sapiens (Human).